A 660-amino-acid chain; its full sequence is Phosphatidylinositol-3-phosphate phosphatase MTMR7 (660 aa).

Residues 126–504 form the Myotubularin phosphatase domain; it reads GWLLVDLSEE…FTYKFWNGMY (379 aa). A 1,2-diacyl-sn-glycero-3-phospho-(1D-myo-inositol-3-phosphate) contacts are provided by Asn-250, Asn-275, and Ile-276. The Phosphocysteine intermediate role is filled by Cys-338. Residues Ser-339, Asp-340, Gly-341, Trp-342, Asp-343, Arg-344, and Arg-384 each coordinate a 1,2-diacyl-sn-glycero-3-phospho-(1D-myo-inositol-3-phosphate). Residues 514–548 are a coiled coil; that stretch reads RQSVTDYLMAVKEESQQLEEELESLEERLEKIQKV. The tract at residues 550 to 660 is disordered; that stretch reads LHGTKVKSKQ…DSDEAVFLTA (111 aa). Residues 566 to 596 show a composition bias toward polar residues; that stretch reads SGFSTSDHSTANTPQDYSGNSKSFPSRSPSQ. Thr-578 is subject to Phosphothreonine. A compositionally biased stretch (basic and acidic residues) spans 641–653; sequence APSEDSGKDRDSD.

It belongs to the protein-tyrosine phosphatase family. Non-receptor class myotubularin subfamily. Heterodimer (via C-terminus) with MTMR9 (via coiled coil domain); the interaction enhances MTMR7 catalytic activity. Does not homodimerize. Interacts with RAB1B (in GDP-bound form). Highly expressed in brain (at protein level). Expressed at low levels in liver, kidney and testis.

Its subcellular location is the cytoplasm. The protein localises to the endomembrane system. It catalyses the reaction a 1,2-diacyl-sn-glycero-3-phospho-(1D-myo-inositol-3-phosphate) + H2O = a 1,2-diacyl-sn-glycero-3-phospho-(1D-myo-inositol) + phosphate. The catalysed reaction is 1D-myo-inositol 1,3-bisphosphate + H2O = 1D-myo-inositol 1-phosphate + phosphate. With respect to regulation, interaction with MTMR9 increases phosphatase activity. Its function is as follows. Lipid phosphatase that specifically dephosphorylates the D-3 position of phosphatidylinositol 3-phosphate (PtdIns(3)P) and inositol 1,3-bisphosphate (Ins(1,3)P2). The chain is Phosphatidylinositol-3-phosphate phosphatase MTMR7 from Mus musculus (Mouse).